The primary structure comprises 514 residues: ATP synthase subunit alpha (514 aa).

ATP is bound at residue 170-177 (GDRQIGKT).

The protein belongs to the ATPase alpha/beta chains family. In terms of assembly, F-type ATPases have 2 components, CF(1) - the catalytic core - and CF(0) - the membrane proton channel. CF(1) has five subunits: alpha(3), beta(3), gamma(1), delta(1), epsilon(1). CF(0) has three main subunits: a(1), b(2) and c(9-12). The alpha and beta chains form an alternating ring which encloses part of the gamma chain. CF(1) is attached to CF(0) by a central stalk formed by the gamma and epsilon chains, while a peripheral stalk is formed by the delta and b chains.

Its subcellular location is the cell inner membrane. The enzyme catalyses ATP + H2O + 4 H(+)(in) = ADP + phosphate + 5 H(+)(out). Produces ATP from ADP in the presence of a proton gradient across the membrane. The alpha chain is a regulatory subunit. The polypeptide is ATP synthase subunit alpha (Stutzerimonas stutzeri (strain A1501) (Pseudomonas stutzeri)).